Reading from the N-terminus, the 280-residue chain is Protein FAM131C (280 aa).

The tract at residues 195–280 (QDSLPSGPSQ…LWEEDEVFYN (86 aa)) is disordered. Positions 197–211 (SLPSGPSQDDSLQAF) are enriched in polar residues. Over residues 215–227 (SPSPDSCPSPEEP) the composition is skewed to pro residues.

Belongs to the FAM131 family.

The sequence is that of Protein FAM131C (FAM131C) from Homo sapiens (Human).